The primary structure comprises 105 residues: Small ribosomal subunit protein uS10 (105 aa).

This sequence belongs to the universal ribosomal protein uS10 family. As to quaternary structure, part of the 30S ribosomal subunit.

Involved in the binding of tRNA to the ribosomes. In Oleidesulfovibrio alaskensis (strain ATCC BAA-1058 / DSM 17464 / G20) (Desulfovibrio alaskensis), this protein is Small ribosomal subunit protein uS10.